Here is a 536-residue protein sequence, read N- to C-terminus: DEAD-box ATP-dependent RNA helicase 26 (536 aa).

A disordered region spans residues 1–44; sequence MMSGGPSDATHRKRRRRRGPKGSGVDGPSIPRAVTTNGAGPEEE. The segment covering 11-20 has biased composition (basic residues); sequence HRKRRRRRGP. The Q motif motif lies at 74–102; that stretch reads TRFDQCPVSPLSLKAIKDAGYEKMTQVQE. The Helicase ATP-binding domain occupies 105–282; that stretch reads LPIILQGEDV…HIAMKRGYKF (178 aa). ATP is bound at residue 118-125; sequence AKTGTGKT. The DEAD box signature appears at 230 to 233; sequence DEAD. In terms of domain architecture, Helicase C-terminal spans 316-466; that stretch reads VLKKHIAEDA…SIQTGVKDAL (151 aa).

This sequence belongs to the DEAD box helicase family.

The catalysed reaction is ATP + H2O = ADP + phosphate + H(+). The protein is DEAD-box ATP-dependent RNA helicase 26 of Oryza sativa subsp. japonica (Rice).